We begin with the raw amino-acid sequence, 944 residues long: Leucine--tRNA ligase (944 aa).

The short motif at 40-51 (PYPSGAGLHVGH) is the 'HIGH' region element. The 'KMSKS' region signature appears at 718 to 722 (KMSKS). Lysine 721 provides a ligand contact to ATP.

Belongs to the class-I aminoacyl-tRNA synthetase family.

The protein resides in the cytoplasm. The enzyme catalyses tRNA(Leu) + L-leucine + ATP = L-leucyl-tRNA(Leu) + AMP + diphosphate. This chain is Leucine--tRNA ligase, found in Bacteroides thetaiotaomicron (strain ATCC 29148 / DSM 2079 / JCM 5827 / CCUG 10774 / NCTC 10582 / VPI-5482 / E50).